Reading from the N-terminus, the 279-residue chain is MMTQMNYTGKVKRVAIIANGKYQSKRVASKLFSVFKDDPDFYLSKKNPDIVISIGGDGMLLSAFHMYEKELDKVRFVGIHTGHLGFYTDYRDFEVDKLIDNLRKDKGEQISYPILKVAITLDDGRVVKARALNEATVKRIEKTMVADVIINHVKFESFRGDGISVSTPTGSTAYNKSLGGAVLHPTIEALQLTEISSLNNRVFRTLGSSIIIPKKDKIELVPKRLGIYTISIDNKTYQLKNVTKVEYFIDDEKIHFVSSPSHTSFWKRVKDAFIGEIDS.

The active-site Proton acceptor is the Asp-57. NAD(+) contacts are provided by residues Asp-57–Gly-58, Asn-133–Glu-134, Arg-159, Asp-161, and Thr-172–Ser-177.

Belongs to the NAD kinase family. The cofactor is a divalent metal cation.

It localises to the cytoplasm. The enzyme catalyses NAD(+) + ATP = ADP + NADP(+) + H(+). Involved in the regulation of the intracellular balance of NAD and NADP, and is a key enzyme in the biosynthesis of NADP. Catalyzes specifically the phosphorylation on 2'-hydroxyl of the adenosine moiety of NAD to yield NADP. This chain is NAD kinase, found in Streptococcus pyogenes serotype M28 (strain MGAS6180).